The chain runs to 303 residues: Putative F-box protein At5g62060 (303 aa).

Residues 27-74 (KSRYIDIPLDITVEILKKLPAKSLVRFQCVSKQWSTIIGSRRDFIDSI) enclose the F-box domain.

The protein is Putative F-box protein At5g62060 of Arabidopsis thaliana (Mouse-ear cress).